Here is a 539-residue protein sequence, read N- to C-terminus: Protoporphyrinogen oxidase (539 aa).

Residues G18 to G23, E43 to S44, W51, G70 to T73, V300, and P521 to V523 contribute to the FAD site.

The protein belongs to the protoporphyrinogen/coproporphyrinogen oxidase family. Protoporphyrinogen oxidase subfamily. FAD is required as a cofactor.

The protein localises to the mitochondrion inner membrane. The catalysed reaction is protoporphyrinogen IX + 3 O2 = protoporphyrin IX + 3 H2O2. It functions in the pathway porphyrin-containing compound metabolism; protoporphyrin-IX biosynthesis; protoporphyrin-IX from protoporphyrinogen-IX: step 1/1. In terms of biological role, catalyzes the 6-electron oxidation of protoporphyrinogen-IX to form protoporphyrin-IX. The polypeptide is Protoporphyrinogen oxidase (Saccharomyces cerevisiae (strain ATCC 204508 / S288c) (Baker's yeast)).